The chain runs to 738 residues: Alcohol dehydrogenase (quinone), dehydrogenase subunit (738 aa).

The N-terminal stretch at 1-35 is a signal peptide; the sequence is MISAVFGKRRSLSRTLTAGTICAALISGYATMASA. Glutamate 97 provides a ligand contact to pyrroloquinoline quinone. A disulfide bridge links cysteine 143 with cysteine 144. A pyrroloquinoline quinone-binding site is contributed by arginine 149. Glutamate 217 lines the Ca(2+) pocket. Residue threonine 278 participates in pyrroloquinoline quinone binding. Ca(2+) is bound by residues asparagine 298 and aspartate 343. Aspartate 343 serves as the catalytic Proton acceptor. The pyrroloquinoline quinone site is built by lysine 370 and isoleucine 584. The 105-residue stretch at 634–738 folds into the Cytochrome c domain; the sequence is FDSKRTDNGY…NADGIPEQLP (105 aa). Residues cysteine 650, cysteine 653, histidine 654, and methionine 693 each coordinate heme c.

It belongs to the bacterial PQQ dehydrogenase family. The alcohol dehydrogenase multicomponent enzyme system is composed of a dehydrogenase subunit I (AdhA) and a cytochrome c subunit II (AdhB). Pyrroloquinoline quinone serves as cofactor. Requires Ca(2+) as cofactor. The cofactor is heme c.

It localises to the cell membrane. It catalyses the reaction ethanol + a ubiquinone = a ubiquinol + acetaldehyde. Dehydrogenase component of the alcohol dehydrogenase multicomponent enzyme system which is involved in the production of acetic acid and in the ethanol oxidase respiratory chain. Quinohemoprotein alcohol dehydrogenase (ADH) catalyzes the oxidation of ethanol to acetaldehyde by transferring electrons to the ubiquinone embedded in the membrane phospholipids. The electrons transfer from ethanol to membranous ubiquinone occurs from pyrroloquinoline quinone (PQQ) to one heme c in subunit I (AdhA), and finally to two heme c in subunit II (AdhB). Besides ubiquinone reduction, ADH also has a ubiquinol (QH2) oxidation reaction which mediates electron transfer from ubiquinol to the non-energy generating bypass oxidase system. The electrons transfer occurs from ubiquinol (QH2) to the additional heme c within subunit II (AdhB). The sequence is that of Alcohol dehydrogenase (quinone), dehydrogenase subunit (adhA) from Gluconacetobacter polyoxogenes (Acetobacter polyoxogenes).